Here is a 486-residue protein sequence, read N- to C-terminus: NADH-quinone oxidoreductase subunit N 1 (486 aa).

14 helical membrane passes run 15–35 (FLPE…DPVI), 46–66 (ISLI…GIAG), 72–92 (MLMV…VGIL), 111–128 (YHAL…MAAS), 131–151 (LIMV…LAGY), 166–186 (FLLG…IYGL), 208–228 (FVGI…SAAP), 241–261 (PTPV…AIFL), 276–296 (QPLV…AAIL), 303–323 (MLAY…TAHS), 331–351 (MFYL…VSVL), 375–395 (AAMF…GGFF), 410–432 (IWLT…RILV), and 455–475 (FALI…GWVL).

This sequence belongs to the complex I subunit 2 family. NDH-1 is composed of 14 different subunits. Subunits NuoA, H, J, K, L, M, N constitute the membrane sector of the complex.

Its subcellular location is the cell inner membrane. The catalysed reaction is a quinone + NADH + 5 H(+)(in) = a quinol + NAD(+) + 4 H(+)(out). Functionally, NDH-1 shuttles electrons from NADH, via FMN and iron-sulfur (Fe-S) centers, to quinones in the respiratory chain. The immediate electron acceptor for the enzyme in this species is believed to be ubiquinone. Couples the redox reaction to proton translocation (for every two electrons transferred, four hydrogen ions are translocated across the cytoplasmic membrane), and thus conserves the redox energy in a proton gradient. This chain is NADH-quinone oxidoreductase subunit N 1, found in Solibacter usitatus (strain Ellin6076).